Here is a 471-residue protein sequence, read N- to C-terminus: 3-isopropylmalate dehydratase large subunit (471 aa).

[4Fe-4S] cluster is bound by residues Cys347, Cys407, and Cys410.

The protein belongs to the aconitase/IPM isomerase family. LeuC type 1 subfamily. Heterodimer of LeuC and LeuD. [4Fe-4S] cluster is required as a cofactor.

It catalyses the reaction (2R,3S)-3-isopropylmalate = (2S)-2-isopropylmalate. Its pathway is amino-acid biosynthesis; L-leucine biosynthesis; L-leucine from 3-methyl-2-oxobutanoate: step 2/4. In terms of biological role, catalyzes the isomerization between 2-isopropylmalate and 3-isopropylmalate, via the formation of 2-isopropylmaleate. The protein is 3-isopropylmalate dehydratase large subunit of Buchnera aphidicola subsp. Baizongia pistaciae (strain Bp).